The sequence spans 171 residues: S-ribosylhomocysteine lyase (171 aa).

Fe cation-binding residues include His54, His58, and Cys128.

Belongs to the LuxS family. Homodimer. It depends on Fe cation as a cofactor.

It catalyses the reaction S-(5-deoxy-D-ribos-5-yl)-L-homocysteine = (S)-4,5-dihydroxypentane-2,3-dione + L-homocysteine. Involved in the synthesis of autoinducer 2 (AI-2) which is secreted by bacteria and is used to communicate both the cell density and the metabolic potential of the environment. The regulation of gene expression in response to changes in cell density is called quorum sensing. Catalyzes the transformation of S-ribosylhomocysteine (RHC) to homocysteine (HC) and 4,5-dihydroxy-2,3-pentadione (DPD). The polypeptide is S-ribosylhomocysteine lyase (Enterobacter sp. (strain 638)).